The chain runs to 250 residues: Leucyl/phenylalanyl-tRNA--protein transferase (250 aa).

This sequence belongs to the L/F-transferase family.

Its subcellular location is the cytoplasm. It carries out the reaction N-terminal L-lysyl-[protein] + L-leucyl-tRNA(Leu) = N-terminal L-leucyl-L-lysyl-[protein] + tRNA(Leu) + H(+). It catalyses the reaction N-terminal L-arginyl-[protein] + L-leucyl-tRNA(Leu) = N-terminal L-leucyl-L-arginyl-[protein] + tRNA(Leu) + H(+). The catalysed reaction is L-phenylalanyl-tRNA(Phe) + an N-terminal L-alpha-aminoacyl-[protein] = an N-terminal L-phenylalanyl-L-alpha-aminoacyl-[protein] + tRNA(Phe). In terms of biological role, functions in the N-end rule pathway of protein degradation where it conjugates Leu, Phe and, less efficiently, Met from aminoacyl-tRNAs to the N-termini of proteins containing an N-terminal arginine or lysine. The sequence is that of Leucyl/phenylalanyl-tRNA--protein transferase from Cupriavidus taiwanensis (strain DSM 17343 / BCRC 17206 / CCUG 44338 / CIP 107171 / LMG 19424 / R1) (Ralstonia taiwanensis (strain LMG 19424)).